A 923-amino-acid chain; its full sequence is Alanine--tRNA ligase (923 aa).

Residues histidine 611, histidine 615, cysteine 714, and histidine 718 each coordinate Zn(2+).

This sequence belongs to the class-II aminoacyl-tRNA synthetase family. Requires Zn(2+) as cofactor.

It is found in the cytoplasm. It carries out the reaction tRNA(Ala) + L-alanine + ATP = L-alanyl-tRNA(Ala) + AMP + diphosphate. In terms of biological role, catalyzes the attachment of alanine to tRNA(Ala) in a two-step reaction: alanine is first activated by ATP to form Ala-AMP and then transferred to the acceptor end of tRNA(Ala). Also edits incorrectly charged Ser-tRNA(Ala) and Gly-tRNA(Ala) via its editing domain. The sequence is that of Alanine--tRNA ligase from Methanosarcina barkeri (strain Fusaro / DSM 804).